Here is a 1066-residue protein sequence, read N- to C-terminus: E3 ubiquitin-protein ligase PDZRN3 (1066 aa).

An RING-type; degenerate zinc finger spans residues 18–56 (CALCHKVLEDPLTTPCGHVFCAGCVLPWVVQEGSCPARC). The segment at 100–158 (EHLERCDFAPARCRHAGCGQVLLRRDVEAHMRDACDARPVGRCQEGCGLPLTHGEQRAG) adopts a TRAF-type zinc-finger fold. PDZ domains follow at residues 249–339 (TLVL…LRRT) and 419–503 (EVDL…IARP). Residue Ser427 is modified to Phosphoserine. Residues 545–603 (QKKHDEDGGTTDTATILSNQHEKDSGVGRTDESTRNDESSEQENNGDDATASSNPLAGQ) form a disordered region. Positions 554 to 563 (TTDTATILSN) are enriched in polar residues. Positions 564-582 (QHEKDSGVGRTDESTRNDE) are enriched in basic and acidic residues. Positions 594–603 (TASSNPLAGQ) are enriched in polar residues. The stretch at 679–704 (ESVDKELELLNEELRSIELECLSIVR) forms a coiled coil. Positions 744-754 (TELPEKSDKDS) are enriched in basic and acidic residues. 2 disordered regions span residues 744–778 (TELP…PDNS) and 808–863 (LLSI…LPSY). 2 stretches are compositionally biased toward polar residues: residues 755–769 (SSAY…STPL) and 845–855 (GSRSPTPSQKL). Positions 975-1025 (KEERKQHLVKAKEQRRRREFMMQSRLDCLKEQQAADDRKEMNILELSHKKM) form a coiled coil.

Interacts with NLGN1 and EFNB2. Interacts with UBE2D2 and with MUSK via the first PDZ domain. Post-translationally, auto-ubiquitinated. Widely expressed, including in the heart, skeletal muscle and liver and, at lower levels, in the brain, colon, small intestine, placenta and lung. Down-regulated in ovarian serous papillary tumors.

The protein localises to the synapse. The protein resides in the cytoplasm. The catalysed reaction is S-ubiquitinyl-[E2 ubiquitin-conjugating enzyme]-L-cysteine + [acceptor protein]-L-lysine = [E2 ubiquitin-conjugating enzyme]-L-cysteine + N(6)-ubiquitinyl-[acceptor protein]-L-lysine.. The protein operates within protein modification; protein ubiquitination. In terms of biological role, E3 ubiquitin-protein ligase. Plays an important role in regulating the surface level of MUSK on myotubes. Mediates the ubiquitination of MUSK, promoting its endocytosis and lysosomal degradation. Might contribute to terminal myogenic differentiation. This Homo sapiens (Human) protein is E3 ubiquitin-protein ligase PDZRN3 (PDZRN3).